The following is a 678-amino-acid chain: Elongation factor G 2 (678 aa).

The 275-residue stretch at glutamine 4 to glutamine 278 folds into the tr-type G domain. GTP-binding positions include alanine 13–threonine 20, aspartate 77–histidine 81, and asparagine 131–aspartate 134.

The protein belongs to the TRAFAC class translation factor GTPase superfamily. Classic translation factor GTPase family. EF-G/EF-2 subfamily.

Its subcellular location is the cytoplasm. Its function is as follows. Catalyzes the GTP-dependent ribosomal translocation step during translation elongation. During this step, the ribosome changes from the pre-translocational (PRE) to the post-translocational (POST) state as the newly formed A-site-bound peptidyl-tRNA and P-site-bound deacylated tRNA move to the P and E sites, respectively. Catalyzes the coordinated movement of the two tRNA molecules, the mRNA and conformational changes in the ribosome. In Hahella chejuensis (strain KCTC 2396), this protein is Elongation factor G 2.